Consider the following 225-residue polypeptide: NAD(P)H-quinone oxidoreductase subunit K, chloroplastic (225 aa).

[4Fe-4S] cluster-binding residues include Cys43, Cys44, Cys108, and Cys139.

Belongs to the complex I 20 kDa subunit family. In terms of assembly, NDH is composed of at least 16 different subunits, 5 of which are encoded in the nucleus. The cofactor is [4Fe-4S] cluster.

It localises to the plastid. The protein resides in the chloroplast thylakoid membrane. It catalyses the reaction a plastoquinone + NADH + (n+1) H(+)(in) = a plastoquinol + NAD(+) + n H(+)(out). It carries out the reaction a plastoquinone + NADPH + (n+1) H(+)(in) = a plastoquinol + NADP(+) + n H(+)(out). Its function is as follows. NDH shuttles electrons from NAD(P)H:plastoquinone, via FMN and iron-sulfur (Fe-S) centers, to quinones in the photosynthetic chain and possibly in a chloroplast respiratory chain. The immediate electron acceptor for the enzyme in this species is believed to be plastoquinone. Couples the redox reaction to proton translocation, and thus conserves the redox energy in a proton gradient. This is NAD(P)H-quinone oxidoreductase subunit K, chloroplastic from Helianthus annuus (Common sunflower).